A 363-amino-acid polypeptide reads, in one-letter code: MSMTTKHNWTKDEIIAIYNKPLMDLLYEAATIHRQQHDPNVVQVSTLLSIKTGGCPEDCGYCPQAARYNTGVEGNDLMTVSQVKAQALRAKSNGSSRVCMGAAWRNVKDGEEFDQVLEMVRTINKLDMEVCCTLGMLTENQAQRLAEAGLYAYNHNLDTSEEYYKDVISTRGFEDRLQTIENVRKTNVTVCSGGIIGMGESIEDRAGMLVALSTLNPQPESVPINALVAVEGTPMEEEKPVEIWEMIRMVATTRIVMPETQVRLSAGRTNMSREGQAMCFFAGANSIFAGDKLLTTPNPDVNEDMKMFETLGMVAQKPFIKIMQPKTVEAADSQFAPLGEKPKWSRPGHTIERNIEASIKSKI.

The region spanning 40–268 (NVVQVSTLLS…ETQVRLSAGR (229 aa)) is the Radical SAM core domain. Residues cysteine 55, cysteine 59, and cysteine 62 each coordinate [4Fe-4S] cluster. [2Fe-2S] cluster is bound by residues cysteine 99, cysteine 131, cysteine 191, and arginine 263.

It belongs to the radical SAM superfamily. Biotin synthase family. Homodimer. The cofactor is [4Fe-4S] cluster. [2Fe-2S] cluster serves as cofactor.

It catalyses the reaction (4R,5S)-dethiobiotin + (sulfur carrier)-SH + 2 reduced [2Fe-2S]-[ferredoxin] + 2 S-adenosyl-L-methionine = (sulfur carrier)-H + biotin + 2 5'-deoxyadenosine + 2 L-methionine + 2 oxidized [2Fe-2S]-[ferredoxin]. It functions in the pathway cofactor biosynthesis; biotin biosynthesis; biotin from 7,8-diaminononanoate: step 2/2. In terms of biological role, catalyzes the conversion of dethiobiotin (DTB) to biotin by the insertion of a sulfur atom into dethiobiotin via a radical-based mechanism. This chain is Biotin synthase, found in Flavobacterium johnsoniae (strain ATCC 17061 / DSM 2064 / JCM 8514 / BCRC 14874 / CCUG 350202 / NBRC 14942 / NCIMB 11054 / UW101) (Cytophaga johnsonae).